Reading from the N-terminus, the 386-residue chain is Succinate--CoA ligase [ADP-forming] subunit beta (386 aa).

The ATP-grasp domain occupies 9 to 243; sequence KQLFRKYSIP…PAEDDPAEAE (235 aa). Residues K45, 52–54, E98, V101, and E106 contribute to the ATP site; that span reads GRG. Residues N198 and D212 each contribute to the Mg(2+) site. Substrate-binding positions include N263 and 320-322; that span reads GIL.

Belongs to the succinate/malate CoA ligase beta subunit family. Heterotetramer of two alpha and two beta subunits. It depends on Mg(2+) as a cofactor.

The enzyme catalyses succinate + ATP + CoA = succinyl-CoA + ADP + phosphate. It catalyses the reaction GTP + succinate + CoA = succinyl-CoA + GDP + phosphate. Its pathway is carbohydrate metabolism; tricarboxylic acid cycle; succinate from succinyl-CoA (ligase route): step 1/1. Functionally, succinyl-CoA synthetase functions in the citric acid cycle (TCA), coupling the hydrolysis of succinyl-CoA to the synthesis of either ATP or GTP and thus represents the only step of substrate-level phosphorylation in the TCA. The beta subunit provides nucleotide specificity of the enzyme and binds the substrate succinate, while the binding sites for coenzyme A and phosphate are found in the alpha subunit. This is Succinate--CoA ligase [ADP-forming] subunit beta from Desulfotalea psychrophila (strain LSv54 / DSM 12343).